The sequence spans 962 residues: Glycine dehydrogenase (decarboxylating) (962 aa).

Lys709 bears the N6-(pyridoxal phosphate)lysine mark.

It belongs to the GcvP family. As to quaternary structure, the glycine cleavage system is composed of four proteins: P, T, L and H. It depends on pyridoxal 5'-phosphate as a cofactor.

The catalysed reaction is N(6)-[(R)-lipoyl]-L-lysyl-[glycine-cleavage complex H protein] + glycine + H(+) = N(6)-[(R)-S(8)-aminomethyldihydrolipoyl]-L-lysyl-[glycine-cleavage complex H protein] + CO2. The glycine cleavage system catalyzes the degradation of glycine. The P protein binds the alpha-amino group of glycine through its pyridoxal phosphate cofactor; CO(2) is released and the remaining methylamine moiety is then transferred to the lipoamide cofactor of the H protein. The chain is Glycine dehydrogenase (decarboxylating) from Shewanella sp. (strain ANA-3).